We begin with the raw amino-acid sequence, 249 residues long: Triosephosphate isomerase (249 aa).

The substrate site is built by Asn12 and Lys14. Lys14 carries the N6-acetyllysine modification. Residue Asn16 is modified to Deamidated asparagine. Tyr68 is modified (3'-nitrotyrosine). Asn72 is modified (deamidated asparagine). At Ser80 the chain carries Phosphoserine. The active-site Electrophile is the His96. Position 106 is a phosphoserine (Ser106). A Glycyl lysine isopeptide (Lys-Gly) (interchain with G-Cter in SUMO1) cross-link involves residue Lys142. Lys149 carries the post-translational modification N6-succinyllysine. Lys156 is subject to N6-acetyllysine; alternate. Lys156 carries the post-translational modification N6-succinyllysine; alternate. Position 159 is a phosphoserine (Ser159). Glu166 serves as the catalytic Proton acceptor. Thr173 bears the Phosphothreonine mark. Position 194 is an N6-acetyllysine; alternate (Lys194). Residue Lys194 is modified to N6-succinyllysine; alternate. Lys194 is subject to N6-methyllysine; alternate. Phosphoserine is present on Ser198. At Tyr209 the chain carries 3'-nitrotyrosine. Phosphoserine is present on Ser212. A Phosphothreonine modification is found at Thr214. Ser223 bears the Phosphoserine mark. Lys238 carries the post-translational modification N6-acetyllysine.

It belongs to the triosephosphate isomerase family. Homodimer. In terms of processing, asn-16 and Asn-72 undergo deamidation which gives rise to four extra negative charges. These are expected to decrease subunit-subunit interactions and so expose the hydrophobic interface to the aqueous environment.

The protein resides in the cytoplasm. It catalyses the reaction D-glyceraldehyde 3-phosphate = dihydroxyacetone phosphate. The enzyme catalyses dihydroxyacetone phosphate = methylglyoxal + phosphate. It participates in carbohydrate degradation; glycolysis; D-glyceraldehyde 3-phosphate from glycerone phosphate: step 1/1. It functions in the pathway carbohydrate biosynthesis; gluconeogenesis. Triosephosphate isomerase is an extremely efficient metabolic enzyme that catalyzes the interconversion between dihydroxyacetone phosphate (DHAP) and D-glyceraldehyde-3-phosphate (G3P) in glycolysis and gluconeogenesis. Its function is as follows. It is also responsible for the non-negligible production of methylglyoxal a reactive cytotoxic side-product that modifies and can alter proteins, DNA and lipids. This Oryctolagus cuniculus (Rabbit) protein is Triosephosphate isomerase (TPI1).